The sequence spans 483 residues: GDP-fucose protein O-fucosyltransferase 3 (483 aa).

Topologically, residues methionine 1–lysine 8 are cytoplasmic. The chain crosses the membrane as a helical; Signal-anchor for type II membrane protein span at residues leucine 9–glutamate 31. Residues leucine 32–phenylalanine 483 are Lumenal-facing. A disordered region spans residues leucine 45–lysine 64. Residues asparagine 110, asparagine 168, and asparagine 318 are each glycosylated (N-linked (GlcNAc...) asparagine). Cysteine 389 and cysteine 392 are joined by a disulfide. N-linked (GlcNAc...) asparagine glycosylation is present at asparagine 468.

Belongs to the glycosyltransferase 10 family.

The protein localises to the endoplasmic reticulum membrane. It carries out the reaction L-threonyl-[protein] + GDP-beta-L-fucose = 3-O-(alpha-L-fucosyl)-L-threonyl-[protein] + GDP + H(+). It catalyses the reaction L-seryl-[protein] + GDP-beta-L-fucose = 3-O-(alpha-L-fucosyl)-L-seryl-[protein] + GDP + H(+). It functions in the pathway protein modification; protein glycosylation. In terms of biological role, protein O-fucosyltransferase that specifically catalyzes O-fucosylation of serine or threonine residues in EMI domains of target proteins, such as MMRN1, MMRN2 and EMID1. Attaches fucose through an O-glycosidic linkage. O-fucosylation of EMI domain-containing proteins may be required for facilitating protein folding and secretion. May also show alpha-(1,3)-fucosyltransferase activity toward the innermost N-acetyl glucosamine (GlcNAc) residue in biantennary N-glycan acceptors. However, this was tested with a library of synthetic substrates and this activity is unsure in vivo. May be involved in biosynthesis of Lewis X-carrying biantennary N-glycans that regulate neuron stem cell self-renewal during brain development. The sequence is that of GDP-fucose protein O-fucosyltransferase 3 (Fut10) from Rattus norvegicus (Rat).